A 168-amino-acid polypeptide reads, in one-letter code: Crossover junction endodeoxyribonuclease RuvC (168 aa).

Active-site residues include Asp8, Glu68, and Asp140. 3 residues coordinate Mg(2+): Asp8, Glu68, and Asp140.

This sequence belongs to the RuvC family. In terms of assembly, homodimer which binds Holliday junction (HJ) DNA. The HJ becomes 2-fold symmetrical on binding to RuvC with unstacked arms; it has a different conformation from HJ DNA in complex with RuvA. In the full resolvosome a probable DNA-RuvA(4)-RuvB(12)-RuvC(2) complex forms which resolves the HJ. Mg(2+) serves as cofactor.

Its subcellular location is the cytoplasm. The catalysed reaction is Endonucleolytic cleavage at a junction such as a reciprocal single-stranded crossover between two homologous DNA duplexes (Holliday junction).. Functionally, the RuvA-RuvB-RuvC complex processes Holliday junction (HJ) DNA during genetic recombination and DNA repair. Endonuclease that resolves HJ intermediates. Cleaves cruciform DNA by making single-stranded nicks across the HJ at symmetrical positions within the homologous arms, yielding a 5'-phosphate and a 3'-hydroxyl group; requires a central core of homology in the junction. The consensus cleavage sequence is 5'-(A/T)TT(C/G)-3'. Cleavage occurs on the 3'-side of the TT dinucleotide at the point of strand exchange. HJ branch migration catalyzed by RuvA-RuvB allows RuvC to scan DNA until it finds its consensus sequence, where it cleaves and resolves the cruciform DNA. This Gluconobacter oxydans (strain 621H) (Gluconobacter suboxydans) protein is Crossover junction endodeoxyribonuclease RuvC.